The following is a 188-amino-acid chain: NAD(P)H-quinone oxidoreductase subunit J (188 aa).

This sequence belongs to the complex I 30 kDa subunit family. In terms of assembly, NDH-1 can be composed of about 15 different subunits; different subcomplexes with different compositions have been identified which probably have different functions.

The protein localises to the cellular thylakoid membrane. The enzyme catalyses a plastoquinone + NADH + (n+1) H(+)(in) = a plastoquinol + NAD(+) + n H(+)(out). It carries out the reaction a plastoquinone + NADPH + (n+1) H(+)(in) = a plastoquinol + NADP(+) + n H(+)(out). Its function is as follows. NDH-1 shuttles electrons from an unknown electron donor, via FMN and iron-sulfur (Fe-S) centers, to quinones in the respiratory and/or the photosynthetic chain. The immediate electron acceptor for the enzyme in this species is believed to be plastoquinone. Couples the redox reaction to proton translocation, and thus conserves the redox energy in a proton gradient. Cyanobacterial NDH-1 also plays a role in inorganic carbon-concentration. The protein is NAD(P)H-quinone oxidoreductase subunit J of Parasynechococcus marenigrum (strain WH8102).